A 1190-amino-acid polypeptide reads, in one-letter code: Pyruvate-flavodoxin oxidoreductase (1190 aa).

4Fe-4S ferredoxin-type domains are found at residues 687-716 (EIPV…SKVY) and 743-773 (FTIQ…PRKK). 12 residues coordinate [4Fe-4S] cluster: cysteine 696, cysteine 699, cysteine 702, cysteine 706, cysteine 752, cysteine 755, cysteine 758, cysteine 762, cysteine 826, cysteine 829, cysteine 854, and cysteine 1089.

It belongs to the pyruvate:ferredoxin/flavodoxin oxidoreductase family. The cofactor is [4Fe-4S] cluster.

It catalyses the reaction oxidized [flavodoxin] + pyruvate + CoA + 2 H(+) = reduced [flavodoxin] + acetyl-CoA + CO2. Functionally, oxidoreductase required for the transfer of electrons from pyruvate to flavodoxin, which reduces nitrogenase. The protein is Pyruvate-flavodoxin oxidoreductase (nifJ) of Trichormus variabilis (strain ATCC 29413 / PCC 7937) (Anabaena variabilis).